Consider the following 497-residue polypeptide: Glycerol kinase (497 aa).

Residue T13 participates in ADP binding. 3 residues coordinate ATP: T13, T14, and S15. T13 contacts sn-glycerol 3-phosphate. ADP is bound at residue R17. Sn-glycerol 3-phosphate is bound by residues R83, E84, and Y135. 3 residues coordinate glycerol: R83, E84, and Y135. H231 bears the Phosphohistidine; by HPr mark. Residue D245 coordinates sn-glycerol 3-phosphate. D245 and Q246 together coordinate glycerol. T267 and G310 together coordinate ADP. ATP contacts are provided by T267, G310, Q314, and G411. Residues G411 and N415 each coordinate ADP.

It belongs to the FGGY kinase family. Homotetramer and homodimer (in equilibrium). The phosphoenolpyruvate-dependent sugar phosphotransferase system (PTS), including enzyme I, and histidine-containing protein (HPr) are required for the phosphorylation, which leads to the activation of the enzyme.

It catalyses the reaction glycerol + ATP = sn-glycerol 3-phosphate + ADP + H(+). Its pathway is polyol metabolism; glycerol degradation via glycerol kinase pathway; sn-glycerol 3-phosphate from glycerol: step 1/1. With respect to regulation, activated by phosphorylation and inhibited by fructose 1,6-bisphosphate (FBP). In terms of biological role, key enzyme in the regulation of glycerol uptake and metabolism. Catalyzes the phosphorylation of glycerol to yield sn-glycerol 3-phosphate. This is Glycerol kinase from Halalkalibacterium halodurans (strain ATCC BAA-125 / DSM 18197 / FERM 7344 / JCM 9153 / C-125) (Bacillus halodurans).